The chain runs to 443 residues: Exodeoxyribonuclease 7 large subunit (443 aa).

The protein belongs to the XseA family. Heterooligomer composed of large and small subunits.

The protein resides in the cytoplasm. It carries out the reaction Exonucleolytic cleavage in either 5'- to 3'- or 3'- to 5'-direction to yield nucleoside 5'-phosphates.. Bidirectionally degrades single-stranded DNA into large acid-insoluble oligonucleotides, which are then degraded further into small acid-soluble oligonucleotides. This chain is Exodeoxyribonuclease 7 large subunit, found in Vibrio campbellii (strain ATCC BAA-1116).